A 329-amino-acid chain; its full sequence is Prostaglandin reductase 1 (329 aa).

Position 18 is a phosphothreonine (threonine 18). The residue at position 20 (serine 20) is a Phosphoserine. Residues glycine 152–glycine 155, lysine 178, tyrosine 193, asparagine 217, cysteine 239–tyrosine 245, phenylalanine 270–valine 272, and asparagine 321 each bind NADP(+). Lysine 178 carries the N6-(2-hydroxyisobutyryl)lysine; alternate modification. Residue lysine 178 is modified to N6-acetyllysine; alternate.

This sequence belongs to the NADP-dependent oxidoreductase L4BD family. As to quaternary structure, monomer or homodimer. High expression in the kidney, liver, and intestine but not in leukocytes.

The protein localises to the cytoplasm. It catalyses the reaction 13,14-dihydro-15-oxo-prostaglandin E1 + NADP(+) = 15-oxoprostaglandin E1 + NADPH + H(+). It carries out the reaction 13,14-dihydro-15-oxo-prostaglandin E2 + NADP(+) = 15-oxoprostaglandin E2 + NADPH + H(+). The enzyme catalyses 13,14-dihydro-15-oxo-prostaglandin F1alpha + NADP(+) = 15-oxoprostaglandin F1alpha + NADPH + H(+). The catalysed reaction is 13,14-dihydro-15-oxo-PGF2alpha + NADP(+) = 15-oxoprostaglandin F2alpha + NADPH + H(+). It catalyses the reaction leukotriene B4 + NADP(+) = 12-oxo-leukotriene B4 + NADPH + H(+). It carries out the reaction 20-hydroxy-leukotriene B4 + NADP(+) = 12-oxo-20-hydroxy-leukotriene B4 + NADPH + H(+). The enzyme catalyses 6-trans-leukotriene B4 + NADP(+) = 12-oxo-(5S)-hydroxy-(6E,8E,10E,14Z)-eicosatetraenoate + NADPH + H(+). The catalysed reaction is (5S,12S)-dihydroxy-(6E,10E,12E,14Z)-eicosatetraenoate + NADP(+) = 12-oxo-(5S)-hydroxy-(6E,8E,10E,14Z)-eicosatetraenoate + NADPH + H(+). It catalyses the reaction an n-alkanal + NADP(+) = an alk-2-enal + NADPH + H(+). It carries out the reaction hexanal + NADP(+) = (E)-hex-2-enal + NADPH + H(+). The enzyme catalyses octanal + NADP(+) = (2E)-octenal + NADPH + H(+). The catalysed reaction is decanal + NADP(+) = (2E)-decenal + NADPH + H(+). It catalyses the reaction dodecanal + NADP(+) = (2E)-dodecenal + NADPH + H(+). It carries out the reaction 4-hydroxynonanal + NADP(+) = (E)-4-hydroxynon-2-enal + NADPH + H(+). The enzyme catalyses pentan-2-one + NADP(+) = (E)-pent-3-en-2-one + NADPH + H(+). The catalysed reaction is nonan-2-one + NADP(+) = (3E)-nonen-2-one + NADPH + H(+). Functionally, NAD(P)H-dependent oxidoreductase involved in metabolic inactivation of pro- and anti-inflammatory eicosanoids: prostaglandins (PG), leukotrienes (LT) and lipoxins (LX). Catalyzes with high efficiency the reduction of the 13,14 double bond of 15-oxoPGs, including 15-oxo-PGE1, 15-oxo-PGE2, 15-oxo-PGF1-alpha and 15-oxo-PGF2-alpha. Catalyzes with lower efficiency the oxidation of the hydroxyl group at C12 of LTB4 and its derivatives, converting them into biologically less active 12-oxo-LTB4 metabolites. Reduces 15-oxo-LXA4 to 13,14 dihydro-15-oxo-LXA4, enhancing neutrophil recruitment at the inflammatory site. May play a role in metabolic detoxification of alkenals and ketones. Reduces alpha,beta-unsaturated alkenals and ketones, particularly those with medium-chain length, showing highest affinity toward (2E)-decenal and (3E)-3-nonen-2-one. May inactivate 4-hydroxy-2-nonenal, a cytotoxic lipid constituent of oxidized low-density lipoprotein particles. The protein is Prostaglandin reductase 1 (PTGR1) of Homo sapiens (Human).